The chain runs to 1021 residues: INO80 complex subunit D (1021 aa).

Residue Lys-87 forms a Glycyl lysine isopeptide (Lys-Gly) (interchain with G-Cter in SUMO2) linkage. Position 132 is a phosphoserine (Ser-132). 5 disordered regions span residues 194 to 239, 514 to 570, 808 to 844, 911 to 940, and 976 to 1021; these read FSTP…PMQG, RGDN…SMPT, RQQYSSDHSHSSPHGSHYDSEHVPSPYSDHITSPHTS, SLSTPPTTSNSETTQPAFATVTPSSSSVLP, and QLSS…PSPN. Positions 224-239 are enriched in polar residues; that stretch reads VCKSPQPQNTSLPMQG. The segment covering 520–554 has biased composition (basic residues); the sequence is KVQHQQQRKPRKKTKPPALTKKHKKKRRRGPRRPQ. The segment covering 911-926 has biased composition (low complexity); that stretch reads SLSTPPTTSNSETTQP. Residues 931–940 show a composition bias toward polar residues; that stretch reads VTPSSSSVLP. The span at 995-1014 shows a compositional bias: low complexity; it reads APPTGFTATGATATSTNNAS.

Belongs to the INO80D family. As to quaternary structure, component of the chromatin remodeling INO80 complex; specifically part of a complex module associated with the N-terminus of INO80.

The protein localises to the nucleus. Its function is as follows. Putative regulatory component of the chromatin remodeling INO80 complex which is involved in transcriptional regulation, DNA replication and probably DNA repair. The sequence is that of INO80 complex subunit D from Mus musculus (Mouse).